The chain runs to 190 residues: Peptidyl-tRNA hydrolase (190 aa).

Tyrosine 18 is a binding site for tRNA. Catalysis depends on histidine 23, which acts as the Proton acceptor. Residues tyrosine 69, asparagine 71, and asparagine 117 each coordinate tRNA.

It belongs to the PTH family. In terms of assembly, monomer.

It localises to the cytoplasm. It catalyses the reaction an N-acyl-L-alpha-aminoacyl-tRNA + H2O = an N-acyl-L-amino acid + a tRNA + H(+). Hydrolyzes ribosome-free peptidyl-tRNAs (with 1 or more amino acids incorporated), which drop off the ribosome during protein synthesis, or as a result of ribosome stalling. Functionally, catalyzes the release of premature peptidyl moieties from peptidyl-tRNA molecules trapped in stalled 50S ribosomal subunits, and thus maintains levels of free tRNAs and 50S ribosomes. The chain is Peptidyl-tRNA hydrolase from Rhodococcus erythropolis (strain PR4 / NBRC 100887).